The chain runs to 71 residues: MGRVRPRYIKSLGEKLLEMYPDKFTDNFEENKKAVAELADIPSKTVRNKVAGYITRLVKRRKAQEKAESAA.

The protein belongs to the eukaryotic ribosomal protein eS17 family.

This chain is Small ribosomal subunit protein eS17, found in Pyrobaculum aerophilum (strain ATCC 51768 / DSM 7523 / JCM 9630 / CIP 104966 / NBRC 100827 / IM2).